Here is a 187-residue protein sequence, read N- to C-terminus: Ribosome-recycling factor (187 aa).

Belongs to the RRF family.

The protein resides in the cytoplasm. In terms of biological role, responsible for the release of ribosomes from messenger RNA at the termination of protein biosynthesis. May increase the efficiency of translation by recycling ribosomes from one round of translation to another. The chain is Ribosome-recycling factor from Anaeromyxobacter sp. (strain Fw109-5).